The following is a 478-amino-acid chain: Proline--tRNA ligase (478 aa).

The protein belongs to the class-II aminoacyl-tRNA synthetase family. ProS type 3 subfamily. In terms of assembly, homodimer.

Its subcellular location is the cytoplasm. The catalysed reaction is tRNA(Pro) + L-proline + ATP = L-prolyl-tRNA(Pro) + AMP + diphosphate. Catalyzes the attachment of proline to tRNA(Pro) in a two-step reaction: proline is first activated by ATP to form Pro-AMP and then transferred to the acceptor end of tRNA(Pro). The protein is Proline--tRNA ligase of Clostridium novyi (strain NT).